Consider the following 352-residue polypeptide: Photosystem II D2 protein (352 aa).

A helical transmembrane segment spans residues 40-60 (CAYLALGGWLTGTSFVTSWYT). His-117 serves as a coordination point for chlorophyll a. A helical transmembrane segment spans residues 124–140 (GFMLRQFEIARLVGVRP). The pheophytin a site is built by Gln-129 and Asn-142. Residues 152 to 165 (VFVSVFLMYPLGQS) traverse the membrane as a helical segment. His-197 provides a ligand contact to chlorophyll a. A helical membrane pass occupies residues 207-227 (GALLCAIHGATVENTLFEDSE). Residues His-214 and Phe-261 each contribute to the a plastoquinone site. Residue His-214 participates in Fe cation binding. His-268 is a Fe cation binding site. The helical transmembrane segment at 278-294 (GLWMSSIGIVGLALNLR) threads the bilayer.

It belongs to the reaction center PufL/M/PsbA/D family. As to quaternary structure, PSII is composed of 1 copy each of membrane proteins PsbA, PsbB, PsbC, PsbD, PsbE, PsbF, PsbH, PsbI, PsbJ, PsbK, PsbL, PsbM, PsbT, PsbX, PsbY, PsbZ, Psb30/Ycf12, peripheral proteins PsbO, CyanoQ (PsbQ), PsbU, PsbV and a large number of cofactors. It forms dimeric complexes. The D1/D2 heterodimer binds P680, chlorophylls that are the primary electron donor of PSII, and subsequent electron acceptors. It shares a non-heme iron and each subunit binds pheophytin, quinone, additional chlorophylls, carotenoids and lipids. There is also a Cl(-1) ion associated with D1 and D2, which is required for oxygen evolution. The PSII complex binds additional chlorophylls, carotenoids and specific lipids. is required as a cofactor.

Its subcellular location is the cellular thylakoid membrane. The catalysed reaction is 2 a plastoquinone + 4 hnu + 2 H2O = 2 a plastoquinol + O2. Photosystem II (PSII) is a light-driven water:plastoquinone oxidoreductase that uses light energy to abstract electrons from H(2)O, generating O(2) and a proton gradient subsequently used for ATP formation. It consists of a core antenna complex that captures photons, and an electron transfer chain that converts photonic excitation into a charge separation. The D1/D2 (PsbA/PsbD) reaction center heterodimer binds P680, the primary electron donor of PSII as well as several subsequent electron acceptors. D2 is needed for assembly of a stable PSII complex. This Synechococcus elongatus (strain ATCC 33912 / PCC 7942 / FACHB-805) (Anacystis nidulans R2) protein is Photosystem II D2 protein.